The chain runs to 132 residues: Intraflagellar transport protein 20 homolog (132 aa).

Residues 70–132 (MKAIGARNLL…EFIDQFIFQK (63 aa)) are IFT57-binding. A coiled-coil region spans residues 74-116 (GARNLLKSIAKQREAQQQQLQALIAEKKTQLERYRVEYEALCK).

As to quaternary structure, component of the IFT complex B, at least composed of IFT20, IFT22, IFT25, IFT27, IFT46, IFT52, TRAF3IP1/IFT54, IFT57, IFT74, IFT80, IFT81, and IFT88. Interacts directly with IFT57 and KIF3B/Kinesin II subunit. Interacts with IFT88. Interacts with CEP83. Interacts with SPEF2 (via C-terminus). Interacts with CBL and CBLB. Interacts with TRIP11. Interacts with TTC21A. Interacts with SPATA1. Interacts with USH1G. Interacts with CCDC146. Interacts with CEP78; regulating IFT20 stability and localization. Expressed predominantly in the testis (at protein level). Expressed in kidney and retina. Expression is up-regulated during spermiogenesis.

Its subcellular location is the golgi apparatus. The protein localises to the cis-Golgi network. It is found in the cytoplasm. It localises to the cytoskeleton. The protein resides in the microtubule organizing center. Its subcellular location is the centrosome. The protein localises to the centriole. It is found in the cilium basal body. It localises to the cell projection. The protein resides in the cilium. Its subcellular location is the cytoplasmic vesicle. The protein localises to the secretory vesicle. It is found in the acrosome. Part of intraflagellar transport (IFT) particles involved in ciliary process assembly. May play a role in the trafficking of ciliary membrane proteins from the Golgi complex to the cilium. Regulates the ciliary platelet-derived growth factor receptor-alpha (PDGFRA) signaling pathway. Required for protein stability of E3 ubiquitin ligases CBL and CBLB that mediate ubiquitination and internalization of PDGFRA for proper feedback inhibition of PDGFRA signaling. Essential for male fertility. Plays an important role in spermatogenesis, particularly spermiogenesis, when germ cells form flagella. May play a role in the transport of flagellar proteins ODF2 and SPAG16 to build sperm flagella and in the removal of redundant sperm cytoplasm. Also involved in autophagy since it is required for trafficking of ATG16L and the expansion of the autophagic compartment. The sequence is that of Intraflagellar transport protein 20 homolog (Ift20) from Mus musculus (Mouse).